The primary structure comprises 540 residues: Light-independent protochlorophyllide reductase subunit B (540 aa).

[4Fe-4S] cluster is bound at residue Asp-36. Asp-287 acts as the Proton donor in catalysis. 422–423 (GL) lines the substrate pocket.

This sequence belongs to the ChlB/BchB/BchZ family. As to quaternary structure, protochlorophyllide reductase is composed of three subunits; BchL, BchN and BchB. Forms a heterotetramer of two BchB and two BchN subunits. [4Fe-4S] cluster serves as cofactor.

It catalyses the reaction chlorophyllide a + oxidized 2[4Fe-4S]-[ferredoxin] + 2 ADP + 2 phosphate = protochlorophyllide a + reduced 2[4Fe-4S]-[ferredoxin] + 2 ATP + 2 H2O. It participates in porphyrin-containing compound metabolism; bacteriochlorophyll biosynthesis (light-independent). In terms of biological role, component of the dark-operative protochlorophyllide reductase (DPOR) that uses Mg-ATP and reduced ferredoxin to reduce ring D of protochlorophyllide (Pchlide) to form chlorophyllide a (Chlide). This reaction is light-independent. The NB-protein (BchN-BchB) is the catalytic component of the complex. The chain is Light-independent protochlorophyllide reductase subunit B from Rhodopseudomonas palustris (strain TIE-1).